A 483-amino-acid polypeptide reads, in one-letter code: Alginate biosynthesis protein AlgA (483 aa).

Belongs to the mannose-6-phosphate isomerase type 2 family. As to quaternary structure, monomer. It depends on Co(2+) as a cofactor.

It catalyses the reaction D-mannose 6-phosphate = D-fructose 6-phosphate. The catalysed reaction is alpha-D-mannose 1-phosphate + GTP + H(+) = GDP-alpha-D-mannose + diphosphate. It participates in nucleotide-sugar biosynthesis; GDP-alpha-D-mannose biosynthesis; GDP-alpha-D-mannose from alpha-D-mannose 1-phosphate (GTP route): step 1/1. It functions in the pathway nucleotide-sugar biosynthesis; GDP-alpha-D-mannose biosynthesis; alpha-D-mannose 1-phosphate from D-fructose 6-phosphate: step 1/2. In terms of biological role, produces a precursor for alginate polymerization. The alginate layer provides a protective barrier against host immune defenses and antibiotics. This Pseudomonas fluorescens protein is Alginate biosynthesis protein AlgA (algA).